Reading from the N-terminus, the 187-residue chain is MNWRALFKPSAKYSILALLVVGIVIGVVGYFATQQTLHATSTDAFCMSCHSNHSLKNEVLASAHGGGKAGVTVQCQDCHLPHGPVDYLIKKIIVSKDLYGFLTIDGFNTQAWLDENRKEQADKALAYFRGNDSANCQHCHTRIYENQPETMKPMAVRMHTNNFKKDPETRKTCVDCHKGVAHPYPKG.

Over 1–12 the chain is Cytoplasmic; that stretch reads MNWRALFKPSAK. A helical transmembrane segment spans residues 13 to 33; it reads YSILALLVVGIVIGVVGYFAT. Residues 34–187 lie on the Periplasmic side of the membrane; sequence QQTLHATSTD…KGVAHPYPKG (154 aa). C46, C49, H64, C75, C78, H79, D97, C136, C139, H140, C173, C176, H177, and H182 together coordinate heme c.

This sequence belongs to the NapC/NirT/NrfH family. As to quaternary structure, homodimer. It depends on heme c as a cofactor.

The protein resides in the cell inner membrane. The enzyme catalyses a quinol + 2 Fe(III)-[cytochrome c](out) = a quinone + 2 Fe(II)-[cytochrome c](out) + 2 H(+)(out). Its activity is regulated as follows. Spectroscopic studies suggest that CymA requires a non-heme cofactor for quinol oxidation. Functionally, quinol dehydrogenase involved in several anaerobic electron transfer pathways. Acquires electrons from the membrane quinone pool and mediates their transfer to several periplasmic terminal reductases and redox shuttles, including the fumarate reductase FccA, the small tetraheme cytochrome (STC), the c-type cytochrome MtrA, the nitrate reductase NapA (either through NapB or directly), the nitrite reductase NrfA and probably also the DmsE subunit of dimethyl sulfoxide (DMSO) reductase. Required for growth on fumarate and on DMSO, and for the reduction of iron(III), manganese(IV), nitrite and nitrate. Not essential for growth on trimethylamine-N-oxide (TMAO). The polypeptide is Tetraheme c-type cytochrome CymA (Shewanella oneidensis (strain ATCC 700550 / JCM 31522 / CIP 106686 / LMG 19005 / NCIMB 14063 / MR-1)).